Consider the following 265-residue polypeptide: Putative 2-aminoethylphosphonate transport system permease protein PhnV (265 aa).

A run of 6 helical transmembrane segments spans residues 13–33 (GVVASVLFIVFFFLPLAVILM), 69–89 (LTIGFCASLFALLCGVWAALA), 104–124 (VFYLPSAIPSVSVGLGILVAF), 131–151 (MNGTLWIVLTAHFVLISAFTF), 185–205 (LPLLMPWMMSALALSLSLSMG), and 233–253 (NIADGAALTIVLVAITLLLMM). In terms of domain architecture, ABC transmembrane type-1 spans 65–253 (LLASLTIGFC…LVAITLLLMM (189 aa)).

Belongs to the binding-protein-dependent transport system permease family.

It localises to the cell inner membrane. Its function is as follows. Probably part of the PhnSTUV complex (TC 3.A.1.11.5) involved in 2-aminoethylphosphonate import. Probably responsible for the translocation of the substrate across the membrane. This is Putative 2-aminoethylphosphonate transport system permease protein PhnV (phnV) from Salmonella choleraesuis (strain SC-B67).